A 154-amino-acid chain; its full sequence is Myoglobin (154 aa).

Residues 2–148 form the Globin domain; the sequence is GLSDGEWQLV…FRNDIAAKYK (147 aa). A Phosphoserine modification is found at Ser4. A nitrite-binding site is contributed by His65. His65 is a binding site for O2. Thr68 carries the phosphothreonine modification. Residue His94 coordinates heme b.

The protein belongs to the globin family. Monomeric.

It localises to the cytoplasm. The protein localises to the sarcoplasm. It carries out the reaction Fe(III)-heme b-[protein] + nitric oxide + H2O = Fe(II)-heme b-[protein] + nitrite + 2 H(+). The enzyme catalyses H2O2 + AH2 = A + 2 H2O. Monomeric heme protein which primary function is to store oxygen and facilitate its diffusion within muscle tissues. Reversibly binds oxygen through a pentacoordinated heme iron and enables its timely and efficient release as needed during periods of heightened demand. Depending on the oxidative conditions of tissues and cells, and in addition to its ability to bind oxygen, it also has a nitrite reductase activity whereby it regulates the production of bioactive nitric oxide. Under stress conditions, like hypoxia and anoxia, it also protects cells against reactive oxygen species thanks to its pseudoperoxidase activity. In Erinaceus europaeus (Western European hedgehog), this protein is Myoglobin (MB).